The sequence spans 244 residues: Ureidoacrylate amidohydrolase RutB (244 aa).

Asp-38 acts as the Proton acceptor in catalysis. Residue Lys-147 is part of the active site. The Nucleophile role is filled by Cys-180.

Belongs to the isochorismatase family. RutB subfamily.

The catalysed reaction is (Z)-3-ureidoacrylate + H2O + H(+) = (Z)-3-aminoacrylate + NH4(+) + CO2. It catalyses the reaction (Z)-3-ureidoacrylate + H2O = (Z)-3-aminoacrylate + carbamate + H(+). The enzyme catalyses (Z)-2-methylureidoacrylate + H2O + H(+) = (Z)-2-methylaminoacrylate + NH4(+) + CO2. Hydrolyzes ureidoacrylate to form aminoacrylate and carbamate. The carbamate hydrolyzes spontaneously, thereby releasing one of the nitrogen atoms of the pyrimidine ring as ammonia and one of its carbon atoms as CO2. The sequence is that of Ureidoacrylate amidohydrolase RutB from Escherichia coli O1:K1 / APEC.